Consider the following 207-residue polypeptide: METNNKLKILKTGTTTVGIKVKDGVVLAADRRASAGMYVAHKYVRKVLYVAPNIGITTAGSVADLQFIYDLLKNIYHYNLITGMRPITIKALATYLANMLSFSKYLPYIVQILIGGVDEQPRLYNLDYVGDITEEDYTATGSGSVEAIGVIEDEYRPDMTLDEAADLARRAIFSSIKRDPYTGTGVIVSKITKNGHEEKEYYPQRKI.

A propeptide spans 1-13 (METNNKLKILKTG) (removed in mature form; by autocatalysis). Threonine 14 acts as the Nucleophile in catalysis.

The protein belongs to the peptidase T1B family. In terms of assembly, the 20S proteasome core is composed of 14 alpha and 14 beta subunits that assemble into four stacked heptameric rings, resulting in a barrel-shaped structure. The two inner rings, each composed of seven catalytic beta subunits, are sandwiched by two outer rings, each composed of seven alpha subunits. The catalytic chamber with the active sites is on the inside of the barrel. Has a gated structure, the ends of the cylinder being occluded by the N-termini of the alpha-subunits. Is capped at one or both ends by the proteasome regulatory ATPase, PAN.

The protein resides in the cytoplasm. The catalysed reaction is Cleavage of peptide bonds with very broad specificity.. With respect to regulation, the formation of the proteasomal ATPase PAN-20S proteasome complex, via the docking of the C-termini of PAN into the intersubunit pockets in the alpha-rings, triggers opening of the gate for substrate entry. Interconversion between the open-gate and close-gate conformations leads to a dynamic regulation of the 20S proteasome proteolysis activity. Component of the proteasome core, a large protease complex with broad specificity involved in protein degradation. The chain is Proteasome subunit beta 2 from Sulfurisphaera tokodaii (strain DSM 16993 / JCM 10545 / NBRC 100140 / 7) (Sulfolobus tokodaii).